Consider the following 158-residue polypeptide: Mitotic-spindle organizing protein 2 (158 aa).

Ser-34 carries the post-translational modification Phosphoserine. Residues 81 to 158 form a disordered region; sequence AGQRVASDSQ…PGRSPPRSGT (78 aa). Gly residues predominate over residues 110–119; the sequence is KGGGALGGGP. Residue Ser-152 is modified to Phosphoserine.

It belongs to the MOZART2 family. In terms of assembly, associates with the gamma-tubulin ring complex (gTuRC) consisting of TUBGCP2, TUBGCP3, TUBGCP4, TUBGCP5 and TUBGCP6 and gamma-tubulin TUBG1 or TUBG2; within the complex, interacts with TUBGCP2; the interaction plays a role in gTuRC activation.

The protein localises to the cytoplasm. The protein resides in the cytoskeleton. Its subcellular location is the microtubule organizing center. It localises to the centrosome. It is found in the spindle. Required for the recruitment and the assembly of the gamma-tubulin ring complex (gTuRC) at the centrosome. The gTuRC regulates the minus-end nucleation of alpha-beta tubulin heterodimers that grow into microtubule protafilaments, a critical step in centrosome duplication and spindle formation. The protein is Mitotic-spindle organizing protein 2 (MZT2) of Bos taurus (Bovine).